We begin with the raw amino-acid sequence, 251 residues long: Flap endonuclease Xni (251 aa).

D104 is a Mg(2+) binding site. In terms of domain architecture, 5'-3' exonuclease spans 160–250 (VLPRQLPDYW…SGNLQQLRLK (91 aa)). K(+) contacts are provided by L171, A172, P180, V182, and V185. The interval 184–189 (GVGAKT) is interaction with DNA.

This sequence belongs to the Xni family. Mg(2+) serves as cofactor. It depends on K(+) as a cofactor.

Has flap endonuclease activity. During DNA replication, flap endonucleases cleave the 5'-overhanging flap structure that is generated by displacement synthesis when DNA polymerase encounters the 5'-end of a downstream Okazaki fragment. The chain is Flap endonuclease Xni from Yersinia pestis bv. Antiqua (strain Nepal516).